The sequence spans 291 residues: Nucleotide-binding protein LGAS_1315 (291 aa).

13 to 20 (GMSGAGKT) contacts ATP. Residue 63-66 (DLRV) participates in GTP binding.

Belongs to the RapZ-like family.

Functionally, displays ATPase and GTPase activities. This chain is Nucleotide-binding protein LGAS_1315, found in Lactobacillus gasseri (strain ATCC 33323 / DSM 20243 / BCRC 14619 / CIP 102991 / JCM 1131 / KCTC 3163 / NCIMB 11718 / NCTC 13722 / AM63).